The following is a 626-amino-acid chain: Mitogen-activated protein kinase kinase kinase 3 (626 aa).

Residues 44-123 form the PB1 domain; it reads DVRIKFEHNG…KSLRILLLSQ (80 aa). Disordered stretches follow at residues 125–184 and 218–273; these read RNHT…YVPE and SSAE…VKGG. Polar residues-rich tracts occupy residues 128–137, 144–155, 165–174, and 219–247; these read TSSSPHSGVS, PSQSAGDINTIY, LSVSSQNPGR, and SAEN…QMSR. 2 positions are modified to phosphoserine: S147 and S166. 2 positions are modified to phosphoserine: S250 and S312. The span at 250 to 270 shows a compositional bias: basic and acidic residues; the sequence is SFPDNRKECSDRETQLYDKGV. A Phosphoserine; by SGK1 modification is found at S337. At S340 the chain carries Phosphoserine. The region spanning 362-622 is the Protein kinase domain; it reads WRRGKLLGQG…AEELLTHHFA (261 aa). Residues 368–376 and K391 each bind ATP; that span reads LGQGAFGRV. D489 functions as the Proton acceptor in the catalytic mechanism.

Belongs to the protein kinase superfamily. STE Ser/Thr protein kinase family. MAP kinase kinase kinase subfamily. Binds both upstream activators and downstream substrates in multimolecular complexes. Part of a complex with MAP2K3, RAC1 and CCM2. Interacts with MAP2K5 and SPAG9. It depends on Mg(2+) as a cofactor. In terms of processing, phosphorylation at Ser-166 and Ser-337 by SGK1 inhibits its activity.

It catalyses the reaction L-seryl-[protein] + ATP = O-phospho-L-seryl-[protein] + ADP + H(+). The enzyme catalyses L-threonyl-[protein] + ATP = O-phospho-L-threonyl-[protein] + ADP + H(+). Its activity is regulated as follows. Activated by phosphorylation on Thr-530. Its function is as follows. Component of a protein kinase signal transduction cascade. Mediates activation of the NF-kappa-B, AP1 and DDIT3 transcriptional regulators. The polypeptide is Mitogen-activated protein kinase kinase kinase 3 (Map3k3) (Mus musculus (Mouse)).